A 142-amino-acid polypeptide reads, in one-letter code: Large ribosomal subunit protein uL13 (142 aa).

It belongs to the universal ribosomal protein uL13 family. As to quaternary structure, part of the 50S ribosomal subunit.

This protein is one of the early assembly proteins of the 50S ribosomal subunit, although it is not seen to bind rRNA by itself. It is important during the early stages of 50S assembly. This chain is Large ribosomal subunit protein uL13, found in Bordetella petrii (strain ATCC BAA-461 / DSM 12804 / CCUG 43448).